A 331-amino-acid polypeptide reads, in one-letter code: MGKPITLSWEAITEKALKNERITLQEGLDILEADDRELLSIMHAAYQVRFHFFQNKVKLNMIFNAKSGYCPENCGYCSQSIISNAPVERYTMLDQKTIVAGAREALKRKAGTYCIVASGRAPSHRELDEVTAAVKEITETMPLKVCACLGLLNEDKAKRLKEAGVHRYNHNINTHQDHHPHITTTHTYHDRLSTLKKVKQSGMSPCSGVIIGMGETNQQIVEMAFALRAIDADSIPVNFLHAIEGTPLEHQERTHPIKALKVLALMRFVNPTKEIRVSGGREFNLRTLQPLALYAANSIFVGDYLTTKGQQVQTDHHIIEDLGFDIEECAL.

A Radical SAM core domain is found at 52–281 (FFQNKVKLNM…TKEIRVSGGR (230 aa)). 3 residues coordinate [4Fe-4S] cluster: Cys70, Cys74, and Cys77. Residues Cys114, Cys146, Cys206, and Arg276 each coordinate [2Fe-2S] cluster.

It belongs to the radical SAM superfamily. Biotin synthase family. In terms of assembly, homodimer. [4Fe-4S] cluster is required as a cofactor. [2Fe-2S] cluster serves as cofactor.

It carries out the reaction (4R,5S)-dethiobiotin + (sulfur carrier)-SH + 2 reduced [2Fe-2S]-[ferredoxin] + 2 S-adenosyl-L-methionine = (sulfur carrier)-H + biotin + 2 5'-deoxyadenosine + 2 L-methionine + 2 oxidized [2Fe-2S]-[ferredoxin]. The protein operates within cofactor biosynthesis; biotin biosynthesis; biotin from 7,8-diaminononanoate: step 2/2. In terms of biological role, catalyzes the conversion of dethiobiotin (DTB) to biotin by the insertion of a sulfur atom into dethiobiotin via a radical-based mechanism. The polypeptide is Biotin synthase (Bacillus pumilus (strain SAFR-032)).